The following is a 388-amino-acid chain: S-adenosylmethionine synthase (388 aa).

An ATP-binding site is contributed by H16. D18 is a Mg(2+) binding site. Residue E44 participates in K(+) binding. Residues E57 and Q100 each coordinate L-methionine. The segment at 100-110 (QSPEIAQGVDR) is flexible loop. ATP contacts are provided by residues 165-167 (DAK), D240, 246-247 (RK), A263, and K267. D240 contributes to the L-methionine binding site. L-methionine is bound at residue K271.

Belongs to the AdoMet synthase family. As to quaternary structure, homotetramer; dimer of dimers. Mg(2+) is required as a cofactor. K(+) serves as cofactor.

Its subcellular location is the cytoplasm. The enzyme catalyses L-methionine + ATP + H2O = S-adenosyl-L-methionine + phosphate + diphosphate. It participates in amino-acid biosynthesis; S-adenosyl-L-methionine biosynthesis; S-adenosyl-L-methionine from L-methionine: step 1/1. Functionally, catalyzes the formation of S-adenosylmethionine (AdoMet) from methionine and ATP. The overall synthetic reaction is composed of two sequential steps, AdoMet formation and the subsequent tripolyphosphate hydrolysis which occurs prior to release of AdoMet from the enzyme. The chain is S-adenosylmethionine synthase from Acinetobacter baumannii (strain AYE).